The sequence spans 255 residues: tRNA (guanine-N(1)-)-methyltransferase (255 aa).

S-adenosyl-L-methionine is bound by residues glycine 113 and 133–138 (IGDYVL).

The protein belongs to the RNA methyltransferase TrmD family. Homodimer.

It localises to the cytoplasm. It carries out the reaction guanosine(37) in tRNA + S-adenosyl-L-methionine = N(1)-methylguanosine(37) in tRNA + S-adenosyl-L-homocysteine + H(+). Specifically methylates guanosine-37 in various tRNAs. This chain is tRNA (guanine-N(1)-)-methyltransferase, found in Klebsiella pneumoniae subsp. pneumoniae (strain ATCC 700721 / MGH 78578).